A 295-amino-acid chain; its full sequence is Ribosomal protein L11 methyltransferase (295 aa).

S-adenosyl-L-methionine is bound by residues Thr146, Gly167, Asp189, and Asn231.

This sequence belongs to the methyltransferase superfamily. PrmA family.

It localises to the cytoplasm. The catalysed reaction is L-lysyl-[protein] + 3 S-adenosyl-L-methionine = N(6),N(6),N(6)-trimethyl-L-lysyl-[protein] + 3 S-adenosyl-L-homocysteine + 3 H(+). Methylates ribosomal protein L11. This chain is Ribosomal protein L11 methyltransferase, found in Vibrio campbellii (strain ATCC BAA-1116).